Here is a 363-residue protein sequence, read N- to C-terminus: Phospho-N-acetylmuramoyl-pentapeptide-transferase (363 aa).

Transmembrane regions (helical) follow at residues 27–47, 76–96, 97–117, 137–157, 171–191, 202–222, 226–246, 248–268, 271–291, 292–312, and 340–360; these read AGAA…PLIA, TMGG…WADL, TDGY…VGFA, LGCE…LMPA, WLLP…TGFG, GLAI…SYLV, VFAD…CVFC, ALVG…AVFM, TGSL…KHEL, VLCI…IQVF, and KIVI…LATL.

This sequence belongs to the glycosyltransferase 4 family. MraY subfamily. It depends on Mg(2+) as a cofactor.

It is found in the cell inner membrane. The enzyme catalyses UDP-N-acetyl-alpha-D-muramoyl-L-alanyl-gamma-D-glutamyl-meso-2,6-diaminopimeloyl-D-alanyl-D-alanine + di-trans,octa-cis-undecaprenyl phosphate = di-trans,octa-cis-undecaprenyl diphospho-N-acetyl-alpha-D-muramoyl-L-alanyl-D-glutamyl-meso-2,6-diaminopimeloyl-D-alanyl-D-alanine + UMP. Its pathway is cell wall biogenesis; peptidoglycan biosynthesis. Functionally, catalyzes the initial step of the lipid cycle reactions in the biosynthesis of the cell wall peptidoglycan: transfers peptidoglycan precursor phospho-MurNAc-pentapeptide from UDP-MurNAc-pentapeptide onto the lipid carrier undecaprenyl phosphate, yielding undecaprenyl-pyrophosphoryl-MurNAc-pentapeptide, known as lipid I. The sequence is that of Phospho-N-acetylmuramoyl-pentapeptide-transferase from Gluconacetobacter diazotrophicus (strain ATCC 49037 / DSM 5601 / CCUG 37298 / CIP 103539 / LMG 7603 / PAl5).